Here is a 70-residue protein sequence, read N- to C-terminus: Small ribosomal subunit protein bS18c (70 aa).

The protein belongs to the bacterial ribosomal protein bS18 family. As to quaternary structure, part of the 30S ribosomal subunit.

The protein localises to the plastid. Its subcellular location is the chloroplast. This is Small ribosomal subunit protein bS18c from Gracilaria tenuistipitata var. liui (Red alga).